A 453-amino-acid polypeptide reads, in one-letter code: Serine/threonine-protein phosphatase 2A regulatory subunit B'' subunit gamma (453 aa).

EF-hand domains lie at 273–308 (PSAL…TMTN) and 341–376 (KEPA…IQEL). Residues D286, D288, N290, M292, and E297 each coordinate Ca(2+).

Interacts with MCM3AP/GANP, PPP5C, and the phosphatase 2A core enzyme composed of the PPP2CA catalytic subunit and the constant regulatory subunit PPP2R1A. Finds in a complex with ABCB1, TFPI2 and PPP2R3C; leading to the dephosphorylation of ABCB1. As to expression, expressed in all tissues tested including heart, brain, spleen, thymus, lung, liver, kidney and testis.

It is found in the nucleus. The protein localises to the cytoplasm. Functionally, may regulate MCM3AP phosphorylation through phosphatase recruitment. May act as a negative regulator of ABCB1 expression and function through the dephosphorylation of ABCB1 by TFPI2/PPP2R3C complex. May play a role in the activation-induced cell death of B-cells. The chain is Serine/threonine-protein phosphatase 2A regulatory subunit B'' subunit gamma (Ppp2r3c) from Mus musculus (Mouse).